Here is a 239-residue protein sequence, read N- to C-terminus: Proteasome activator complex subunit 2 (239 aa).

Ala2 carries the post-translational modification N-acetylalanine. At Ser10 the chain carries Phosphoserine. Residues 65–87 (DIPIPDPPPKDDEMETDKQEKKE) are disordered. A compositionally biased stretch (basic and acidic residues) spans 72-87 (PPKDDEMETDKQEKKE).

It belongs to the PA28 family. Heterodimer of PSME1 and PSME2, which forms a hexameric ring.

Functionally, implicated in immunoproteasome assembly and required for efficient antigen processing. The PA28 activator complex enhances the generation of class I binding peptides by altering the cleavage pattern of the proteasome. The polypeptide is Proteasome activator complex subunit 2 (Psme2) (Mus musculus (Mouse)).